The sequence spans 124 residues: Glucagon-1 (124 aa).

The first 25 residues, 1–25 (MKRIHSLAGILLVLGLIQSSCRVLM), serve as a signal peptide directing secretion. A disordered region spans residues 28–54 (ADPSSSLEADSTLKDEPRELSNMKRHS). Residues 38 to 54 (STLKDEPRELSNMKRHS) are compositionally biased toward basic and acidic residues. A propeptide spanning residues 84-88 (SGVAE) is cleaved from the precursor.

It belongs to the glucagon family.

It localises to the secreted. Glucagon plays a key role in glucose metabolism and homeostasis. Regulates blood glucose by increasing gluconeogenesis and decreasing glycolysis. This Lophius americanus (American angler) protein is Glucagon-1 (gcg1).